The primary structure comprises 554 residues: Valerianol synthase TPS1C (554 aa).

Positions 307 and 311 each coordinate Mg(2+). Positions 326 to 330 match the DDXXD motif motif; that stretch reads VQRWD. Residues Asp452, Ser456, and Glu460 each coordinate Mg(2+).

This sequence belongs to the terpene synthase family. The cofactor is Mg(2+).

It catalyses the reaction (2E,6E)-farnesyl diphosphate + H2O = valerianol + diphosphate. The protein operates within secondary metabolite biosynthesis; terpenoid biosynthesis. In terms of biological role, terpene synthase that catalyzes the biosynthesis of the terpene valerianol, which is a volatile compound of floral scent. In Camellia hiemalis (Camellia), this protein is Valerianol synthase TPS1C.